The following is a 131-amino-acid chain: MAGVKALVALSFSGAIGLTFLMLGCALEDYGVYWPLFVLIFHAISPIPHFIAKRVTYDSDATSSACRELAYFFTTGIVVSAFGFPVILARVAVIKWGACGLVLAGNAVIFLTIQGFFLIFGRGDDFSWEQW.

4 consecutive transmembrane segments (helical) span residues 7–27 (LVAL…GCAL), 32–52 (VYWP…HFIA), 69–89 (LAYF…VILA), and 100–120 (GLVL…FLIF).

The protein belongs to the OB-RGRP/VPS55 family. As to quaternary structure, interacts with LEPR. Interacts with RAB13. As to expression, expressed at the highest levels in heart and placenta and at a lesser extent in lung, liver, skeletal muscle, kidney and pancreas.

Its subcellular location is the golgi apparatus membrane. The protein localises to the endosome membrane. Its function is as follows. Negatively regulates leptin receptor (LEPR) cell surface expression, and thus decreases response to leptin. Negatively regulates growth hormone (GH) receptor cell surface expression in liver. May play a role in liver resistance to GH during periods of reduced nutrient availability. This Homo sapiens (Human) protein is Leptin receptor gene-related protein (LEPROT).